A 497-amino-acid chain; its full sequence is Anthranilate synthase component 1 (497 aa).

L-tryptophan-binding positions include Ser-49 and 271 to 273 (PYL). Residue 312–313 (GT) participates in chorismate binding. Glu-339 contacts Mg(2+). Chorismate is bound by residues Arg-447, 461–463 (GAG), and Gly-463. Glu-476 contacts Mg(2+).

The protein belongs to the anthranilate synthase component I family. In terms of assembly, heterotetramer consisting of two non-identical subunits: a beta subunit (TrpG) and a large alpha subunit (TrpE). The cofactor is Mg(2+).

It carries out the reaction chorismate + L-glutamine = anthranilate + pyruvate + L-glutamate + H(+). It functions in the pathway amino-acid biosynthesis; L-tryptophan biosynthesis; L-tryptophan from chorismate: step 1/5. Its activity is regulated as follows. Feedback inhibited by tryptophan. Part of a heterotetrameric complex that catalyzes the two-step biosynthesis of anthranilate, an intermediate in the biosynthesis of L-tryptophan. In the first step, the glutamine-binding beta subunit (TrpG) of anthranilate synthase (AS) provides the glutamine amidotransferase activity which generates ammonia as a substrate that, along with chorismate, is used in the second step, catalyzed by the large alpha subunit of AS (TrpE) to produce anthranilate. In the absence of TrpG, TrpE can synthesize anthranilate directly from chorismate and high concentrations of ammonia. This chain is Anthranilate synthase component 1 (trpE), found in Acinetobacter calcoaceticus.